The sequence spans 336 residues: Galactose/methyl galactoside import permease protein MglC (336 aa).

The Periplasmic portion of the chain corresponds to 1–16 (MSALNKKSFLTYLKEG). A helical transmembrane segment spans residues 17–37 (GIYVVLLVLLAIIIFQDPTFL). Topologically, residues 38 to 52 (SLLNLSNILTQSSVR) are cytoplasmic. The helical transmembrane segment at 53-73 (IIIALGVAGLIVTQGTDLSAG) threads the bilayer. Topologically, residues 74–106 (RQVGLAAVVAATLLQSMDNANKVFPEMATMPIA) are periplasmic. A run of 2 helical transmembrane segments spans residues 107–127 (LVIL…GLII) and 128–148 (AYLN…VYGI). Over 149–180 (NSLYYDFVGASPISGFDSGFSTFAQGFVALGS) the chain is Periplasmic. Residues 181 to 201 (FRLSYITFYALIAVAFVWVLW) form a helical membrane-spanning segment. Topologically, residues 202 to 226 (NKTRFGKNIFAIGGNPEAAKVSGVN) are cytoplasmic. A helical transmembrane segment spans residues 227-247 (VGLNLLMIYALSGVFYAFGGM). At 248-256 (LEAGRIGSA) the chain is on the periplasmic side. A helical membrane pass occupies residues 257–277 (TNNLGFMYELDAIAACVVGGV). A topological domain (cytoplasmic) is located at residue Ser278. The chain crosses the membrane as a helical span at residues 279–299 (FSGGVGTVIGVVTGVIIFTVI). Residues 300 to 305 (NYGLTY) are Periplasmic-facing. The helical transmembrane segment at 306–326 (IGVNPYWQYIIKGAIIIFAVA) threads the bilayer. The Cytoplasmic segment spans residues 327-336 (LDSLKYARKK).

Belongs to the binding-protein-dependent transport system permease family. AraH/RbsC subfamily. The complex is composed of one ATP-binding protein (MglA), two transmembrane proteins (MglC) and a solute-binding protein (MglB).

It is found in the cell inner membrane. In terms of biological role, part of the ABC transporter complex MglABC involved in galactose/methyl galactoside import. Probably responsible for the translocation of the substrate across the membrane. This Escherichia coli (strain K12) protein is Galactose/methyl galactoside import permease protein MglC (mglC).